Consider the following 294-residue polypeptide: Nucleotide-binding protein Maqu_2718 (294 aa).

8–15 provides a ligand contact to ATP; the sequence is GRSGSGKS. Residue 61–64 participates in GTP binding; that stretch reads DARN.

The protein belongs to the RapZ-like family.

Its function is as follows. Displays ATPase and GTPase activities. This is Nucleotide-binding protein Maqu_2718 from Marinobacter nauticus (strain ATCC 700491 / DSM 11845 / VT8) (Marinobacter aquaeolei).